The chain runs to 155 residues: Protein-export protein SecB (155 aa).

It belongs to the SecB family. Homotetramer, a dimer of dimers. One homotetramer interacts with 1 SecA dimer.

It localises to the cytoplasm. One of the proteins required for the normal export of preproteins out of the cell cytoplasm. It is a molecular chaperone that binds to a subset of precursor proteins, maintaining them in a translocation-competent state. It also specifically binds to its receptor SecA. This is Protein-export protein SecB from Enterobacter sp. (strain 638).